A 387-amino-acid chain; its full sequence is Chlorophyll synthase, chloroplastic (387 aa).

Residues 1–57 (MTSILNTVSTIHSSRVTSVDRVGVLSLRNSDSVEFTRRRSGFSTLIYESPGRRFVVR) constitute a chloroplast transit peptide. Residues 62-81 (DTDKVKSQTPDKAPAGGSSI) are disordered. The next 7 membrane-spanning stretches (helical) occupy residues 182–202 (VITQ…ILDV), 210–230 (TVFY…APPL), 241–261 (FALG…LFGT), 266–286 (VVVL…VNDF), 311–331 (WICV…LLAS), 336–356 (YALA…KYFL), and 364–384 (VKYQ…TALA).

Belongs to the UbiA prenyltransferase family. Chlorophyll synthase subfamily. As to expression, low level in flower buds, flowers, stems, leaves, greening cotyledons and immature siliques, but not in mature siliques or seeds.

Its subcellular location is the plastid. The protein localises to the chloroplast membrane. It catalyses the reaction phytyl diphosphate + chlorophyllide a + H(+) = chlorophyll a + diphosphate. Its pathway is porphyrin-containing compound metabolism; chlorophyll biosynthesis. Its function is as follows. Involved in one of the last steps of the biosynthesis of chlorophyll a. Catalyzes the esterification of chlorophillide a or b with a preference for geranylgeranyldiphosphate (GGPP) rather than for phytyldiphosphate (PhyPP). The chain is Chlorophyll synthase, chloroplastic (CHLG) from Arabidopsis thaliana (Mouse-ear cress).